The following is a 273-amino-acid chain: MHDANIRVAIAGAGGRMGRQLIQAALALEGVQLGAALEREGSSLLGSDAGELAGAGKTGVTVQSSLDAIKDDFDVFIDFTRPEGTLNHLAFCRQHGKGMVIGTTGFDEAGKQAIRDAAADIAIVFAANFSVGVNVMLKLLEKAAKVMGDYTDIEIIEAHHRHKVDAPSGTALAMGEAIAHALDKDLKDCAVYSREGHTGERVPGTIGFATVRAGDIVGEHTAMFADIGERLEITHKASSRMTFANGAVRSALWLSGKESGIFDMRDVLDLNNL.

NAD(+) is bound by residues 12–17 (GAGGRM) and Glu-38. Arg-39 contributes to the NADP(+) binding site. Residues 102 to 104 (GTT) and 126 to 129 (AANF) each bind NAD(+). Catalysis depends on His-159, which acts as the Proton donor/acceptor. His-160 is a (S)-2,3,4,5-tetrahydrodipicolinate binding site. The Proton donor role is filled by Lys-163. 169–170 (GT) contacts (S)-2,3,4,5-tetrahydrodipicolinate.

The protein belongs to the DapB family. As to quaternary structure, homotetramer.

The protein localises to the cytoplasm. The enzyme catalyses (S)-2,3,4,5-tetrahydrodipicolinate + NAD(+) + H2O = (2S,4S)-4-hydroxy-2,3,4,5-tetrahydrodipicolinate + NADH + H(+). The catalysed reaction is (S)-2,3,4,5-tetrahydrodipicolinate + NADP(+) + H2O = (2S,4S)-4-hydroxy-2,3,4,5-tetrahydrodipicolinate + NADPH + H(+). It participates in amino-acid biosynthesis; L-lysine biosynthesis via DAP pathway; (S)-tetrahydrodipicolinate from L-aspartate: step 4/4. Catalyzes the conversion of 4-hydroxy-tetrahydrodipicolinate (HTPA) to tetrahydrodipicolinate. This chain is 4-hydroxy-tetrahydrodipicolinate reductase, found in Escherichia coli O127:H6 (strain E2348/69 / EPEC).